The following is a 795-amino-acid chain: MKFNESWLREWVDPKVSTAQLCDQITMLGLEVDSVEPISGEFSGVVVAEVVECTQHPDADKLRVTKVNVGAERLLSIVCGAANCRQGLKVACAIEGAILPGNFKIKKTKLRGQLSEGMLCSFSELGIKEDQSSGIIELPADAPIGVDIREYLNLNDVAIEVSLTPNRADCLSIAGIAREVAVINQMEVKSPVIKPVPATLSAPIEIDIQAPSACPHYLARIIKNVNVNATSPLWLQEKLRRCGILSIDPIVDITNLSLLELGQPMHAFDAEKVKAPIQVRLAKDQEQLVLLDGTTAKLQTNTLVIADQKNVLALAGIMGGEASKVNAETKDIILEAAFFAPLALTGRTRQYGLHTDASHRFERGVDPTLARQAMERATTLIIEICGGEVAEVCEAINTEYLPKQPIIRLRRTKLDSVIGHYIEDRLVTDILVRLGLNVTCENDGWIATVPSWRFDLEIEEDLIEEIARIYGYNRIPNNALLAHLTLKGSAEKVLEPNRIKTVLVDNDYQEVVTYSFVDPKIQQLLHPQQEALILPNPISSEMSAMRVSLLTGLLQTVLYNQNRQQNRIRIFEQGLRFIPDASAESAVRQEAVFAAVIVGEKHIANWEGKSKAVDFFDLKGDLEQILALTANKELTFVAKQFPALHPGQSAAIMLNEQEVGFIGTLHPSIGQKLGIKGTPIVFELLADVVSERAIPVAKEISKFPANNRDIAIVIDEHIPAREVLSACYHAGREQLTAVNLFDVYQGANLVVGKKSLAISLTIQNTEKTLTEEEISAVIQLVLDELAQRFQASLRD.

The tRNA-binding domain maps to 39 to 149 (SGEFSGVVVA…ADAPIGVDIR (111 aa)). Positions 402–477 (PKQPIIRLRR…RIYGYNRIPN (76 aa)) constitute a B5 domain. 4 residues coordinate Mg(2+): Asp455, Asp461, Glu464, and Glu465. The 94-residue stretch at 701–794 (SKFPANNRDI…LAQRFQASLR (94 aa)) folds into the FDX-ACB domain.

It belongs to the phenylalanyl-tRNA synthetase beta subunit family. Type 1 subfamily. In terms of assembly, tetramer of two alpha and two beta subunits. Requires Mg(2+) as cofactor.

Its subcellular location is the cytoplasm. It catalyses the reaction tRNA(Phe) + L-phenylalanine + ATP = L-phenylalanyl-tRNA(Phe) + AMP + diphosphate + H(+). This is Phenylalanine--tRNA ligase beta subunit from Haemophilus ducreyi (strain 35000HP / ATCC 700724).